The sequence spans 272 residues: Orotidine 5'-phosphate decarboxylase (272 aa).

Lysine 95 acts as the Proton donor in catalysis.

Belongs to the OMP decarboxylase family. Type 2 subfamily.

It carries out the reaction orotidine 5'-phosphate + H(+) = UMP + CO2. Its pathway is pyrimidine metabolism; UMP biosynthesis via de novo pathway; UMP from orotate: step 2/2. This is Orotidine 5'-phosphate decarboxylase from Cupriavidus taiwanensis (strain DSM 17343 / BCRC 17206 / CCUG 44338 / CIP 107171 / LMG 19424 / R1) (Ralstonia taiwanensis (strain LMG 19424)).